The primary structure comprises 186 residues: dCTP deaminase (186 aa).

Residue 107-112 (KSSYAR) coordinates dCTP. Residue Glu133 is the Proton donor/acceptor of the active site. The dCTP site is built by Gln152, Tyr166, and Gln176.

This sequence belongs to the dCTP deaminase family. Homotrimer.

It carries out the reaction dCTP + H2O + H(+) = dUTP + NH4(+). It participates in pyrimidine metabolism; dUMP biosynthesis; dUMP from dCTP (dUTP route): step 1/2. In terms of biological role, catalyzes the deamination of dCTP to dUTP. The chain is dCTP deaminase from Chloroflexus aurantiacus (strain ATCC 29366 / DSM 635 / J-10-fl).